Consider the following 241-residue polypeptide: MGIDVKELIRRNRQKHAEFEKKINYKFIDLRLLQKALIHSSYAFEQAQAGKNNERLEFVGDAVLDLVVGNALYRRFPEMREGELTRLRAALVNEGHLATMARKINLGYFLCLGKGEDNSKGREKSSILSCAYEAVIGAIFQDGGYDAVAALVERFFLPVIDRRKEDLLLADAKSRLQEILQEKHNEGPSYRLDNEEGPSHKKRFTISVLFRDEVLGTGEAGSKKEAEQRGAALAIKKIESM.

The region spanning 16–144 (HAEFEKKINY…VIGAIFQDGG (129 aa)) is the RNase III domain. Glu57 is a Mg(2+) binding site. Active-site residues include Asp61 and Glu133. Residue Glu133 coordinates Mg(2+). A DRBM domain is found at 171–240 (DAKSRLQEIL…AALAIKKIES (70 aa)).

The protein belongs to the ribonuclease III family. As to quaternary structure, homodimer. Mg(2+) is required as a cofactor.

The protein resides in the cytoplasm. The catalysed reaction is Endonucleolytic cleavage to 5'-phosphomonoester.. Digests double-stranded RNA. Involved in the processing of primary rRNA transcript to yield the immediate precursors to the large and small rRNAs (23S and 16S). Processes some mRNAs, and tRNAs when they are encoded in the rRNA operon. Processes pre-crRNA and tracrRNA of type II CRISPR loci if present in the organism. This Desulfotalea psychrophila (strain LSv54 / DSM 12343) protein is Ribonuclease 3.